The primary structure comprises 249 residues: uncharacterized protein (249 aa).

It belongs to the AIM2 family.

The protein resides in the cytoplasm. It is found in the nucleus. This is an uncharacterized protein from Schizosaccharomyces pombe (strain 972 / ATCC 24843) (Fission yeast).